The sequence spans 498 residues: Galactose-1-phosphate uridylyltransferase (498 aa).

Belongs to the galactose-1-phosphate uridylyltransferase type 2 family.

The protein resides in the cytoplasm. It carries out the reaction alpha-D-galactose 1-phosphate + UDP-alpha-D-glucose = alpha-D-glucose 1-phosphate + UDP-alpha-D-galactose. It participates in carbohydrate metabolism; galactose metabolism. The polypeptide is Galactose-1-phosphate uridylyltransferase (Clostridium perfringens (strain SM101 / Type A)).